Consider the following 213-residue polypeptide: Putative thymidylate kinase 251L (213 aa).

Position 21–28 (21–28 (GCDKTGKS)) interacts with ATP.

It belongs to the thymidylate kinase family.

The catalysed reaction is dTMP + ATP = dTDP + ADP. It participates in pyrimidine metabolism; dTTP biosynthesis. Its function is as follows. Catalyzes the conversion of dTMP to dTDP. This Acheta domesticus (House cricket) protein is Putative thymidylate kinase 251L.